The following is an 874-amino-acid chain: Probable inorganic carbon transporter subunit DabA (874 aa).

Zn(2+)-binding residues include C398, D400, H580, and C595.

This sequence belongs to the inorganic carbon transporter (TC 9.A.2) DabA family. Forms a complex with DabB. It depends on Zn(2+) as a cofactor.

It is found in the cell membrane. Its function is as follows. Part of an energy-coupled inorganic carbon pump. This is Probable inorganic carbon transporter subunit DabA from Bacillus cereus (strain AH187).